A 268-amino-acid chain; its full sequence is Protein c-ets-1-B (268 aa).

The helix HI-1 stretch occupies residues 131–139; that stretch reads FKDYVRDRA. The segment at 150–157 is helix HI-2; sequence AAALAGYT. Positions 162 to 242 form a DNA-binding region, ETS; sequence IQLWQFLLEL…AGKRYVYRFV (81 aa). The segment at 245 to 249 is helix H4; it reads LQSLL. Residues 253 to 259 form a helix H5 region; that stretch reads PEELHAM.

Belongs to the ETS family. In terms of assembly, binds DNA as a homodimer; homodimerization is required for transcription activation.

It is found in the nucleus. The protein resides in the cytoplasm. Its activity is regulated as follows. Autoinhibited by a module composed of four alpha helices (HI-1, HI-2, H4, and H5) that flank the DNA-binding ETS domain, reducing the affinity for DNA. Functionally, transcription factor. Directly controls the expression of cytokine and chemokine genes in a wide variety of different cellular contexts. The polypeptide is Protein c-ets-1-B (ets1-b) (Xenopus laevis (African clawed frog)).